Reading from the N-terminus, the 140-residue chain is Large-conductance mechanosensitive channel (140 aa).

2 helical membrane-spanning segments follow: residues V14–L34 and G85–V105.

This sequence belongs to the MscL family. Homopentamer.

It is found in the cell inner membrane. Channel that opens in response to stretch forces in the membrane lipid bilayer. May participate in the regulation of osmotic pressure changes within the cell. In Sphingopyxis alaskensis (strain DSM 13593 / LMG 18877 / RB2256) (Sphingomonas alaskensis), this protein is Large-conductance mechanosensitive channel.